The chain runs to 74 residues: Putative defensin-like protein 12 (74 aa).

An N-terminal signal peptide occupies residues 1-26; sequence MAKPCAAFLVFLCLSMLILSIPDISC. Cystine bridges form between cysteine 26/cysteine 50, cysteine 33/cysteine 59, and cysteine 39/cysteine 61.

This sequence belongs to the DEFL family.

The protein resides in the secreted. This is Putative defensin-like protein 12 from Arabidopsis thaliana (Mouse-ear cress).